The primary structure comprises 308 residues: Olfactory receptor 4E2 (308 aa).

Residues 1-24 (MGALNQTRVTEFIFLGLTDNWVLE) lie on the Extracellular side of the membrane. A glycan (N-linked (GlcNAc...) asparagine) is linked at Asn-5. The chain crosses the membrane as a helical span at residues 25 to 45 (ILFFVPFTVTYMLTLLGNFLI). Over 46 to 57 (VVTIVFTPRLHN) the chain is Cytoplasmic. A helical transmembrane segment spans residues 58–78 (PMYFFLSNLSFIDICHSSVTV). Residues 79–97 (PKMLEGLLLERKTISFDNC) lie on the Extracellular side of the membrane. The cysteines at positions 97 and 179 are disulfide-linked. Residues 98–118 (IAQLFFLHLFACSEIFLLTIM) traverse the membrane as a helical segment. Residues His-105 and Cys-109 each coordinate Cu cation. The Cytoplasmic segment spans residues 119–143 (AYDRYVAICIPLHYSNVMNMKVCVQ). Residues 144–164 (LVFALWLGGTIHSLVQTFLTI) form a helical membrane-spanning segment. Over 165–204 (RLPYCGPNIIDSYFCDVPPVIKLACTDTYLTGILIVSNSG) the chain is Extracellular. A helical membrane pass occupies residues 205-225 (TISLVCFLALVTSYTVILFSL). The Cytoplasmic segment spans residues 226–236 (RKQSAEGRRKA). The helical transmembrane segment at 237-257 (LSTCSAHFMVVALFFGPCIFL) threads the bilayer. Topologically, residues 258-268 (YTRPDSSFSID) are extracellular. A Cu cation-binding site is contributed by Arg-260. A helical transmembrane segment spans residues 269–289 (KVVSVFYTVVTPLLNPLIYTL). The Cytoplasmic segment spans residues 290–308 (RNEEVKTAMKHLRQRRICS).

This sequence belongs to the G-protein coupled receptor 1 family. In terms of tissue distribution, expressed in olfactory epithelium, specifically in the olfactory sensory neurons of the septal organ.

Its subcellular location is the cell membrane. Copper binding enhances receptor activity in response to odorant binding. Functionally, olfactory receptor that is activated by the binding of organosulfur odorants with thioether groups such as (methylthio)methanethiol (MTMT) and bis(methylthiomethyl) disulfide. Also binds odorants cis-cyclooctene and tert-butyl mercaptan. The activity of this receptor is mediated by G proteins which activate adenylyl cyclase (Potential). This Mus musculus (Mouse) protein is Olfactory receptor 4E2.